Reading from the N-terminus, the 205-residue chain is Pyridoxine/pyridoxamine 5'-phosphate oxidase (205 aa).

FMN is bound by residues 53–58 (RMVLLK), 68–69 (YT), K75, and Q97. K58 is a substrate binding site. 3 residues coordinate substrate: Y115, R119, and S123. FMN contacts are provided by residues 132-133 (QS) and W177. 183–185 (RLH) contacts substrate. FMN is bound at residue R187.

It belongs to the pyridoxamine 5'-phosphate oxidase family. In terms of assembly, homodimer. Requires FMN as cofactor.

It catalyses the reaction pyridoxamine 5'-phosphate + O2 + H2O = pyridoxal 5'-phosphate + H2O2 + NH4(+). It carries out the reaction pyridoxine 5'-phosphate + O2 = pyridoxal 5'-phosphate + H2O2. Its pathway is cofactor metabolism; pyridoxal 5'-phosphate salvage; pyridoxal 5'-phosphate from pyridoxamine 5'-phosphate: step 1/1. It participates in cofactor metabolism; pyridoxal 5'-phosphate salvage; pyridoxal 5'-phosphate from pyridoxine 5'-phosphate: step 1/1. Its function is as follows. Catalyzes the oxidation of either pyridoxine 5'-phosphate (PNP) or pyridoxamine 5'-phosphate (PMP) into pyridoxal 5'-phosphate (PLP). In Mesorhizobium japonicum (strain LMG 29417 / CECT 9101 / MAFF 303099) (Mesorhizobium loti (strain MAFF 303099)), this protein is Pyridoxine/pyridoxamine 5'-phosphate oxidase.